The sequence spans 476 residues: UDP-N-acetylmuramate--L-alanine ligase (476 aa).

125-131 provides a ligand contact to ATP; that stretch reads GTHGKTT.

It belongs to the MurCDEF family.

It localises to the cytoplasm. It carries out the reaction UDP-N-acetyl-alpha-D-muramate + L-alanine + ATP = UDP-N-acetyl-alpha-D-muramoyl-L-alanine + ADP + phosphate + H(+). The protein operates within cell wall biogenesis; peptidoglycan biosynthesis. Cell wall formation. This is UDP-N-acetylmuramate--L-alanine ligase from Actinobacillus succinogenes (strain ATCC 55618 / DSM 22257 / CCUG 43843 / 130Z).